Consider the following 412-residue polypeptide: Histone-lysine N-methyltransferase SUV39H1 (412 aa).

The tract at residues 1-89 (MAENLKGCSV…LKCIRVLKQF (89 aa)) is interaction with SIRT1. A Chromo domain is found at 43-101 (FEVEYLCDYKKIREQEYYLVKWRGYPDSENTWEPRQNLKCIRVLKQFHKDLERELVRRH). The Pre-SET domain maps to 179–240 (VGCECQDCLL…DCPNRVVQKG (62 aa)). 9 residues coordinate Zn(2+): C181, C183, C186, C194, C195, C222, C226, C228, and C232. Positions 243–366 (YDLCIFRTND…AGEELTFDYN (124 aa)) constitute an SET domain. 254 to 256 (RGW) is an S-adenosyl-L-methionine binding site. The segment at 255–377 (GWGVRTLEKI…QVDPVDMEST (123 aa)) is mediates interaction with MECOM. Residue K266 is modified to N6-acetyllysine. S-adenosyl-L-methionine is bound by residues Y297 and 323 to 324 (NH). C326 is a Zn(2+) binding site. Phosphoserine is present on S391. The Post-SET domain maps to 396-412 (VRIECKCGTTACRKYLF). 3 residues coordinate Zn(2+): C400, C402, and C407.

The protein belongs to the class V-like SAM-binding methyltransferase superfamily. Histone-lysine methyltransferase family. Suvar3-9 subfamily. Interacts with CCAR2 and GFI1B. Component of the eNoSC complex, composed of SIRT1, SUV39H1 and RRP8. Interacts with H3 and H4 histones. Interacts with DNMT3B, CBX1, CBX4, MBD1, RUNX1, RUNX3, MYOD1, SMAD5 and RB1. Interacts with SBF1 through the SET domain. Interacts with HDAC1 and HDAC2 through the N-terminus and associates with the core histone deacetylase complex composed of HDAC1, HDAC2, RBBP4 and RBBP7. Interacts (via SET domain) with MECOM; enhances MECOM transcriptional repression activity. Interacts with LMNA; the interaction increases stability of SUV39H1. The large PER complex involved in the histone methylation is composed of at least PER2, CBX3, TRIM28, SUV39H1 and/or SUV39H2; CBX3 mediates the formation of the complex. Post-translationally, phosphorylated on serine residues, and to a lesser degree, on threonine residues. Acetylated at Lys-266, leading to inhibition of enzyme activity. SIRT1-mediated deacetylation relieves this inhibition. In terms of processing, ubiquitinated by the DCX(DCAF13) E3 ubiquitin ligase complex, leading to its degradation. Widely expressed.

It localises to the nucleus. The protein localises to the nucleus lamina. The protein resides in the nucleoplasm. It is found in the chromosome. Its subcellular location is the centromere. It catalyses the reaction L-lysyl(9)-[histone H3] + 3 S-adenosyl-L-methionine = N(6),N(6),N(6)-trimethyl-L-lysyl(9)-[histone H3] + 3 S-adenosyl-L-homocysteine + 3 H(+). Its activity is regulated as follows. Negatively regulated by CCAR2. In terms of biological role, histone methyltransferase that specifically trimethylates 'Lys-9' of histone H3 using monomethylated H3 'Lys-9' as substrate. H3 'Lys-9' trimethylation represents a specific tag for epigenetic transcriptional repression by recruiting HP1 (CBX1, CBX3 and/or CBX5) proteins to methylated histones. Mainly functions in heterochromatin regions, thereby playing a central role in the establishment of constitutive heterochromatin at pericentric and telomere regions. H3 'Lys-9' trimethylation is also required to direct DNA methylation at pericentric repeats. SUV39H1 is targeted to histone H3 via its interaction with RB1 and is involved in many processes, such as repression of MYOD1-stimulated differentiation, regulation of the control switch for exiting the cell cycle and entering differentiation, repression by the PML-RARA fusion protein, BMP-induced repression, repression of switch recombination to IgA and regulation of telomere length. Component of the eNoSC (energy-dependent nucleolar silencing) complex, a complex that mediates silencing of rDNA in response to intracellular energy status and acts by recruiting histone-modifying enzymes. The eNoSC complex is able to sense the energy status of cell: upon glucose starvation, elevation of NAD(+)/NADP(+) ratio activates SIRT1, leading to histone H3 deacetylation followed by dimethylation of H3 at 'Lys-9' (H3K9me2) by SUV39H1 and the formation of silent chromatin in the rDNA locus. Recruited by the PER complex to the E-box elements of the circadian target genes such as PER2 itself or PER1, contributes to the conversion of local chromatin to a heterochromatin-like repressive state through H3 'Lys-9' trimethylation. In Mus musculus (Mouse), this protein is Histone-lysine N-methyltransferase SUV39H1 (Suv39h1).